Consider the following 556-residue polypeptide: Polypeptide N-acetylgalactosaminyltransferase 13 (556 aa).

The Cytoplasmic segment spans residues 1–4 (MRRF). The helical; Signal-anchor for type II membrane protein transmembrane segment at 5–27 (VYCKVVLATSLMWVLVDVFLLLY) threads the bilayer. The Lumenal segment spans residues 28-556 (FSECNKCDDK…WLLRNMTLGT (529 aa)). Asparagine 94 and asparagine 116 each carry an N-linked (GlcNAc...) asparagine glycan. Intrachain disulfides connect cysteine 105-cysteine 338, cysteine 329-cysteine 407, cysteine 441-cysteine 458, cysteine 481-cysteine 496, and cysteine 522-cysteine 539. Residues 114 to 224 (LPNTSVVIVF…LGWLEPLLAR (111 aa)) form a catalytic subdomain A region. Residues aspartate 155 and arginine 185 each coordinate substrate. Positions 208 and 210 each coordinate Mn(2+). Positions 284 to 346 (PVRTPTMAGG…TCSHVGHVFR (63 aa)) are catalytic subdomain B. Position 315 (tryptophan 315) interacts with substrate. Histidine 343 is a binding site for Mn(2+). Arginine 346 and tyrosine 351 together coordinate substrate. A Ricin B-type lectin domain is found at 428–550 (YSLGEIRNVE…GSRSQQWLLR (123 aa)). Asparagine 551 carries N-linked (GlcNAc...) asparagine glycosylation.

This sequence belongs to the glycosyltransferase 2 family. GalNAc-T subfamily. Mn(2+) is required as a cofactor. Specifically expressed in neuronal cells. Expressed in fetal brain, whole adult brain, cerebral cortex and cerebellum. Not expressed in other tissues tested.

The protein localises to the golgi apparatus membrane. The catalysed reaction is L-seryl-[protein] + UDP-N-acetyl-alpha-D-galactosamine = a 3-O-[N-acetyl-alpha-D-galactosaminyl]-L-seryl-[protein] + UDP + H(+). It carries out the reaction L-threonyl-[protein] + UDP-N-acetyl-alpha-D-galactosamine = a 3-O-[N-acetyl-alpha-D-galactosaminyl]-L-threonyl-[protein] + UDP + H(+). The protein operates within protein modification; protein glycosylation. Catalyzes the initial reaction in O-linked oligosaccharide biosynthesis, the transfer of an N-acetyl-D-galactosamine (GalNAc) residue from UDP-GalNAc to a serine or threonine residue on the protein receptor. Generates GalNAc-O-Ser/Thr structure also known as Tn antigen, which itself is immunogenic but also serves as a precursor for the synthesis of different mucin-type O-glycan core structures. Contributes to the synthesis of O-linked glycans on mucins and proteoglycans of the central nervous system. May promote neurogenesis through glycosylation and stabilization of PDPN. Functionally, can glycosylate both unmodified peptides and glycopeptides that already contain an O-linked GalNAc sugar. Transfers GalNAc to Thr-/Ser-rich tandem repeats GTTPSPVPTTSTTSAP of MUC5AC, specifically on Thr-3 of non-glycosylated MUC5AC peptide, on Thr-12 and Thr-13 of preglycosylated MUC5AC at Thr-3 (MUC5AC-3), on Thr-3 of preglycosylated MUC5AC at Thr-13 (MUC5AC-13) and on Thr-12 of preglycosylated MUC5AC at Thr-3 and Thr-13 (MUC5AC-3,13). Transfers GalNAc to three consecutive serine/threonine residues on SDC3 forming a triplet-Tn epitope expressed in Purkinje cells of the developing brain. Its function is as follows. Can glycosylate both unmodified peptides and glycopeptides that already contain an O-linked GalNAc sugar. Transfers GalNAc to Thr-/Ser-rich tandem repeats GTTPSPVPTTSTTSAP of MUC5AC, specifically on Thr-3 of non-glycosylated MUC5AC peptide, on Thr-12 and Thr-13 of preglycosylated MUC5AC at Thr-3 (MUC5AC-3), on Thr-3 of preglycosylated MUC5AC at Thr-13 (MUC5AC-13) and on Thr-12 of preglycosylated MUC5AC at Thr-3 and Thr-13 (MUC5AC-3,13). The chain is Polypeptide N-acetylgalactosaminyltransferase 13 (GALNT13) from Homo sapiens (Human).